A 290-amino-acid chain; its full sequence is 4-diphosphocytidyl-2-C-methyl-D-erythritol kinase (290 aa).

The active site involves Lys13. 93 to 103 lines the ATP pocket; the sequence is PVQAGLGGGSA. Asp135 is a catalytic residue.

It belongs to the GHMP kinase family. IspE subfamily.

The catalysed reaction is 4-CDP-2-C-methyl-D-erythritol + ATP = 4-CDP-2-C-methyl-D-erythritol 2-phosphate + ADP + H(+). It participates in isoprenoid biosynthesis; isopentenyl diphosphate biosynthesis via DXP pathway; isopentenyl diphosphate from 1-deoxy-D-xylulose 5-phosphate: step 3/6. Catalyzes the phosphorylation of the position 2 hydroxy group of 4-diphosphocytidyl-2C-methyl-D-erythritol. This chain is 4-diphosphocytidyl-2-C-methyl-D-erythritol kinase, found in Desulfitobacterium hafniense (strain Y51).